We begin with the raw amino-acid sequence, 491 residues long: Probable CtpA-like serine protease (491 aa).

Residues M1–K22 form a disordered region. The span at H8–K22 shows a compositional bias: polar residues. Residues L31 to V51 form a helical membrane-spanning segment. One can recognise a PDZ domain in the interval T119–G201. Residues S324, D335, and K349 each act as charge relay system in the active site.

Belongs to the peptidase S41A family.

It is found in the cell membrane. This chain is Probable CtpA-like serine protease, found in Staphylococcus epidermidis (strain ATCC 12228 / FDA PCI 1200).